The sequence spans 292 residues: 4-hydroxy-tetrahydrodipicolinate synthase (292 aa).

T45 serves as a coordination point for pyruvate. The Proton donor/acceptor role is filled by Y134. K162 acts as the Schiff-base intermediate with substrate in catalysis. V204 serves as a coordination point for pyruvate.

It belongs to the DapA family. As to quaternary structure, homotetramer; dimer of dimers.

The protein resides in the cytoplasm. It catalyses the reaction L-aspartate 4-semialdehyde + pyruvate = (2S,4S)-4-hydroxy-2,3,4,5-tetrahydrodipicolinate + H2O + H(+). It functions in the pathway amino-acid biosynthesis; L-lysine biosynthesis via DAP pathway; (S)-tetrahydrodipicolinate from L-aspartate: step 3/4. Its function is as follows. Catalyzes the condensation of (S)-aspartate-beta-semialdehyde [(S)-ASA] and pyruvate to 4-hydroxy-tetrahydrodipicolinate (HTPA). This chain is 4-hydroxy-tetrahydrodipicolinate synthase, found in Marinobacter nauticus (strain ATCC 700491 / DSM 11845 / VT8) (Marinobacter aquaeolei).